The chain runs to 361 residues: Actin maturation protease (361 aa).

Residues 1–75 (MTSPCSFPLK…PPPPPLPSAV (75 aa)) are disordered. 2 stretches are compositionally biased toward pro residues: residues 24–33 (NIPPPLPLNP) and 52–72 (PLPP…PPLP). The interval 134–254 (SCIQEGPQCG…WAVSAGVLIG (121 aa)) is peptidase C39-like. Cys-142 is an active-site residue.

Belongs to the ACTMAP family. In terms of assembly, interacts (via N-terminus) with PFN2 isoforms 1/IIa and 2/IIb; the interactions may facilitate efficient cleavage of the acetylated N-terminus of immature actin. Interacts with PFN1.

The protein localises to the cytoplasm. It carries out the reaction N-terminal N(alpha)-acetyl-L-methionyl-L-aspartyl-[protein] + H2O = N-terminal L-aspartyl-[protein] + N-acetyl-L-methionine. The enzyme catalyses N-terminal N(alpha)-acetyl-L-methionyl-L-glutamyl-[protein] + H2O = N-terminal L-glutamyl-[protein] + N-acetyl-L-methionine. It catalyses the reaction N-terminal N(alpha)-acetyl-L-cysteinyl-L-aspartyl-[protein] + H2O = N-terminal L-aspartyl-[protein] + N-acetyl-L-cysteine. The catalysed reaction is N-terminal N(alpha)-acetyl-L-cysteinyl-L-glutamyl-[protein] + H2O = N-terminal L-glutamyl-[protein] + N-acetyl-L-cysteine. Its function is as follows. Actin maturation protease that specifically mediates the cleavage of immature acetylated N-terminal actin, thereby contributing to actin maturation. Cleaves N-terminal acetylated methionine of immature cytoplasmic beta- and gamma-actins Actb and Actg1 after translation. Cleaves N-terminal acetylated cysteine of muscle alpha-actins Acta1, Actc1 and Acta2 after canonical removal of N-terminal methionine. The sequence is that of Actin maturation protease from Mus musculus (Mouse).